Reading from the N-terminus, the 280-residue chain is Suppressor of disruption of TFIIS (280 aa).

The protein belongs to the SSM1 family.

Its function is as follows. Could be an enzyme that inactivates 6-azauracil by modifying it. This Saccharomyces cerevisiae (strain ATCC 204508 / S288c) (Baker's yeast) protein is Suppressor of disruption of TFIIS (SDT1).